The primary structure comprises 137 residues: Large ribosomal subunit protein uL16 (137 aa).

This sequence belongs to the universal ribosomal protein uL16 family. Part of the 50S ribosomal subunit.

In terms of biological role, binds 23S rRNA and is also seen to make contacts with the A and possibly P site tRNAs. This Psychrobacter arcticus (strain DSM 17307 / VKM B-2377 / 273-4) protein is Large ribosomal subunit protein uL16.